A 124-amino-acid chain; its full sequence is MTRVKRGIVARKRRKKILNYTKGFRGAASKLFRTANQRYMKALKLSFVNRRKKKRDFRSLWISRLNAAVRKNGLNYNEFIFALKICNINLNRKTLSQISICDPQTFNLLYDTLKPLLIKHLNTK.

It belongs to the bacterial ribosomal protein bL20 family.

It localises to the plastid. Its subcellular location is the chloroplast. Binds directly to 23S ribosomal RNA and is necessary for the in vitro assembly process of the 50S ribosomal subunit. It is not involved in the protein synthesizing functions of that subunit. The sequence is that of Large ribosomal subunit protein bL20c from Stigeoclonium helveticum (Green alga).